We begin with the raw amino-acid sequence, 220 residues long: Uracil-DNA glycosylase (220 aa).

Asp65 acts as the Proton acceptor in catalysis.

Belongs to the uracil-DNA glycosylase (UDG) superfamily. UNG family.

Its subcellular location is the cytoplasm. It catalyses the reaction Hydrolyzes single-stranded DNA or mismatched double-stranded DNA and polynucleotides, releasing free uracil.. In terms of biological role, excises uracil residues from the DNA which can arise as a result of misincorporation of dUMP residues by DNA polymerase or due to deamination of cytosine. The protein is Uracil-DNA glycosylase of Phocaeicola vulgatus (strain ATCC 8482 / DSM 1447 / JCM 5826 / CCUG 4940 / NBRC 14291 / NCTC 11154) (Bacteroides vulgatus).